The primary structure comprises 65 residues: DNA gyrase inhibitor YacG (65 aa).

Residues C9, C12, C28, and C32 each coordinate Zn(2+). Residues 45–65 are disordered; it reads KRIPSSGDLSESDDWSEEPKQ. Residues 54 to 65 are compositionally biased toward acidic residues; sequence SESDDWSEEPKQ.

The protein belongs to the DNA gyrase inhibitor YacG family. Interacts with GyrB. The cofactor is Zn(2+).

Functionally, inhibits all the catalytic activities of DNA gyrase by preventing its interaction with DNA. Acts by binding directly to the C-terminal domain of GyrB, which probably disrupts DNA binding by the gyrase. This Shigella boydii serotype 18 (strain CDC 3083-94 / BS512) protein is DNA gyrase inhibitor YacG.